The chain runs to 220 residues: 7-cyano-7-deazaguanine synthase (220 aa).

10 to 20 (FSGGQDSTTCL) contacts ATP. 4 residues coordinate Zn(2+): Cys-186, Cys-195, Cys-198, and Cys-201.

The protein belongs to the QueC family. As to quaternary structure, homodimer. Requires Zn(2+) as cofactor.

The enzyme catalyses 7-carboxy-7-deazaguanine + NH4(+) + ATP = 7-cyano-7-deazaguanine + ADP + phosphate + H2O + H(+). The protein operates within purine metabolism; 7-cyano-7-deazaguanine biosynthesis. Catalyzes the ATP-dependent conversion of 7-carboxy-7-deazaguanine (CDG) to 7-cyano-7-deazaguanine (preQ(0)). The protein is 7-cyano-7-deazaguanine synthase of Bacillus mycoides (strain KBAB4) (Bacillus weihenstephanensis).